The following is a 206-amino-acid chain: Holliday junction branch migration complex subunit RuvA (206 aa).

Positions 1-67 (MIASIFGKIT…QILEEGFAFN (67 aa)) are domain I. The segment at 68–141 (TLEEKEWFSK…YDRDDGGKRI (74 aa)) is domain II. The interval 141–145 (IKPNT) is flexible linker. Residues 146–206 (AMANDYDEMF…QNNEVTNKTA (61 aa)) are domain III.

The protein belongs to the RuvA family. Homotetramer. Forms an RuvA(8)-RuvB(12)-Holliday junction (HJ) complex. HJ DNA is sandwiched between 2 RuvA tetramers; dsDNA enters through RuvA and exits via RuvB. An RuvB hexamer assembles on each DNA strand where it exits the tetramer. Each RuvB hexamer is contacted by two RuvA subunits (via domain III) on 2 adjacent RuvB subunits; this complex drives branch migration. In the full resolvosome a probable DNA-RuvA(4)-RuvB(12)-RuvC(2) complex forms which resolves the HJ.

It localises to the cytoplasm. Its function is as follows. The RuvA-RuvB-RuvC complex processes Holliday junction (HJ) DNA during genetic recombination and DNA repair, while the RuvA-RuvB complex plays an important role in the rescue of blocked DNA replication forks via replication fork reversal (RFR). RuvA specifically binds to HJ cruciform DNA, conferring on it an open structure. The RuvB hexamer acts as an ATP-dependent pump, pulling dsDNA into and through the RuvAB complex. HJ branch migration allows RuvC to scan DNA until it finds its consensus sequence, where it cleaves and resolves the cruciform DNA. This chain is Holliday junction branch migration complex subunit RuvA, found in Mycoplasma pneumoniae (strain ATCC 29342 / M129 / Subtype 1) (Mycoplasmoides pneumoniae).